Consider the following 100-residue polypeptide: uncharacterized protein (100 aa).

This is an uncharacterized protein from Lactuca sativa (Garden lettuce).